A 474-amino-acid polypeptide reads, in one-letter code: Protein anachronism (474 aa).

The signal sequence occupies residues 1–33; that stretch reads MASAMRGEKCERSRIRELVLILSLITMAGDSRA. Residues N54, N62, N73, N116, and N144 are each glycosylated (N-linked (GlcNAc...) asparagine). The segment at 173–195 is disordered; sequence NPGQTREHNPGQASTQPISTENP. Residues 183-195 are compositionally biased toward polar residues; the sequence is GQASTQPISTENP. N342 carries N-linked (GlcNAc...) asparagine glycosylation. The span at 359–372 shows a compositional bias: polar residues; the sequence is FIESTTSNSPTIDN. The interval 359–474 is disordered; sequence FIESTTSNSP…HHRIPAHKQE (116 aa). Composition is skewed to basic residues over residues 390–400 and 437–474; these read LVHHRRHHHNH and NHHR…HKQE.

In terms of tissue distribution, synthesized in some glial cells and secreted.

The protein localises to the secreted. Its function is as follows. Negatively regulates proliferation of neuronal precursor cells, thereby controlling the timing of postembryonic neurogenesis. In Drosophila melanogaster (Fruit fly), this protein is Protein anachronism (ana).